The chain runs to 245 residues: 4-hydroxy-tetrahydrodipicolinate reductase (245 aa).

NAD(+)-binding positions include 7 to 12 (GAKGKV), 75 to 77 (GTT), and 102 to 105 (APNF). H132 functions as the Proton donor/acceptor in the catalytic mechanism. H133 contributes to the (S)-2,3,4,5-tetrahydrodipicolinate binding site. K136 serves as the catalytic Proton donor. 142 to 143 (GT) serves as a coordination point for (S)-2,3,4,5-tetrahydrodipicolinate.

The protein belongs to the DapB family.

Its subcellular location is the cytoplasm. It carries out the reaction (S)-2,3,4,5-tetrahydrodipicolinate + NAD(+) + H2O = (2S,4S)-4-hydroxy-2,3,4,5-tetrahydrodipicolinate + NADH + H(+). The catalysed reaction is (S)-2,3,4,5-tetrahydrodipicolinate + NADP(+) + H2O = (2S,4S)-4-hydroxy-2,3,4,5-tetrahydrodipicolinate + NADPH + H(+). It functions in the pathway amino-acid biosynthesis; L-lysine biosynthesis via DAP pathway; (S)-tetrahydrodipicolinate from L-aspartate: step 4/4. Its function is as follows. Catalyzes the conversion of 4-hydroxy-tetrahydrodipicolinate (HTPA) to tetrahydrodipicolinate. In Mycobacterium bovis (strain ATCC BAA-935 / AF2122/97), this protein is 4-hydroxy-tetrahydrodipicolinate reductase.